Reading from the N-terminus, the 1093-residue chain is Phosphorylase b kinase regulatory subunit beta (1093 aa).

Residue A2 is modified to N-acetylalanine. Phosphoserine is present on A4. Residues L7–Y29 are calmodulin-binding. Phosphoserine; by autocatalysis is present on S12. Residues S27 and S701 each carry the phosphoserine modification. Positions E689 to I716 are disordered. Calmodulin-binding regions lie at residues R768 to S795 and N920 to R951. The S-farnesyl cysteine moiety is linked to residue C1090.

The protein belongs to the phosphorylase b kinase regulatory chain family. As to quaternary structure, hexadecamer of 4 heterotetramers, each composed of alpha, beta, gamma, and delta subunits. Alpha (PHKA1 or PHKA2) and beta (PHKB) are regulatory subunits, gamma (PHKG1 or PHKG2) is the catalytic subunit, and delta is calmodulin. Ser-701 is probably phosphorylated by PKA. In terms of processing, although the final Cys may be farnesylated, the terminal tripeptide is probably not removed, and the C-terminus is not methylated.

The protein resides in the cell membrane. The protein operates within glycan biosynthesis; glycogen metabolism. With respect to regulation, by phosphorylation of various serine residues. In terms of biological role, phosphorylase b kinase catalyzes the phosphorylation of serine in certain substrates, including troponin I. The beta chain acts as a regulatory unit and modulates the activity of the holoenzyme in response to phosphorylation. In Homo sapiens (Human), this protein is Phosphorylase b kinase regulatory subunit beta (PHKB).